The primary structure comprises 190 residues: E3 ubiquitin-protein ligase RNF4 (190 aa).

Positions 1–16 (MSTRKRRGGAINSRQA) are required for ubiquitination activity. Positions 1 to 29 (MSTRKRRGGAINSRQAQKRTREATSTPEI) are disordered. The segment at 4-61 (RKRRGGAINSRQAQKRTREATSTPEISLEAEPIELVETAGDEIVDLTCESLEPVVVDL) is mediates interaction with TRPS1. 4 consecutive short sequence motifs (SUMO interaction motif) follow at residues 36 to 39 (IELV), 46 to 49 (IVDL), 57 to 59 (VVV), and 67 to 70 (VVIV). 2 positions are modified to phosphoserine: S94 and S95. 8 residues coordinate Zn(2+): C132, C135, C154, H156, C159, C162, C173, and C176. An RING-type zinc finger spans residues 132 to 177 (CPICMDGYSEIVQNGRLIVSTECGHVFCSQCLRDSLKNANTCPTCR).

In terms of assembly, homodimer (via RING-type zinc finger domain). Interacts with GSC2. Interacts with AR/the androgen receptor and TBP. Interacts with TCF20. Interacts with PATZ1. Interacts with TRPS1; negatively regulates TRPS1 transcriptional repressor activity. Interacts with PML (isoform PML-1, isoform PML-2, isoform PML-3, isoform PML-4, isoform PML-5 and isoform PML-6). Interacts with PRDM1/Blimp-1. Sumoylated; conjugated by one or two SUMO1 moieties. Post-translationally, autoubiquitinated. In terms of tissue distribution, widely expressed at low levels in many tissues; highly expressed in testis.

Its subcellular location is the cytoplasm. The protein localises to the nucleus. The protein resides in the PML body. The enzyme catalyses S-ubiquitinyl-[E2 ubiquitin-conjugating enzyme]-L-cysteine + [acceptor protein]-L-lysine = [E2 ubiquitin-conjugating enzyme]-L-cysteine + N(6)-ubiquitinyl-[acceptor protein]-L-lysine.. Its pathway is protein modification; protein ubiquitination. Its function is as follows. E3 ubiquitin-protein ligase which binds polysumoylated chains covalently attached to proteins and mediates 'Lys-6'-, 'Lys-11'-, 'Lys-48'- and 'Lys-63'-linked polyubiquitination of those substrates and their subsequent targeting to the proteasome for degradation. Regulates the degradation of several proteins including PML and the transcriptional activator PEA3. Involved in chromosome alignment and spindle assembly, it regulates the kinetochore CENPH-CENPI-CENPK complex by targeting polysumoylated CENPI to proteasomal degradation. Regulates the cellular responses to hypoxia and heat shock through degradation of respectively EPAS1 and PARP1. Alternatively, it may also bind DNA/nucleosomes and have a more direct role in the regulation of transcription for instance enhancing basal transcription and steroid receptor-mediated transcriptional activation. Catalyzes ubiquitination of sumoylated PARP1 in response to PARP1 trapping to chromatin, leading to PARP1 removal from chromatin by VCP/p97. This Homo sapiens (Human) protein is E3 ubiquitin-protein ligase RNF4.